The sequence spans 165 residues: Protein SprT (165 aa).

The SprT-like domain maps to 20–163; it reads EKLAQANLKL…RCVHCGEQLV (144 aa). H78 lines the Zn(2+) pocket. E79 is an active-site residue. Position 82 (H82) interacts with Zn(2+).

Belongs to the SprT family. Zn(2+) serves as cofactor.

The protein localises to the cytoplasm. The sequence is that of Protein SprT from Escherichia coli (strain K12 / MC4100 / BW2952).